Here is a 37-residue protein sequence, read N- to C-terminus: Cytochrome b6-f complex subunit 5 (37 aa).

The chain crosses the membrane as a helical span at residues L5 to A25.

Belongs to the PetG family. In terms of assembly, the 4 large subunits of the cytochrome b6-f complex are cytochrome b6, subunit IV (17 kDa polypeptide, PetD), cytochrome f and the Rieske protein, while the 4 small subunits are PetG, PetL, PetM and PetN. The complex functions as a dimer.

The protein localises to the plastid. It is found in the chloroplast thylakoid membrane. Its function is as follows. Component of the cytochrome b6-f complex, which mediates electron transfer between photosystem II (PSII) and photosystem I (PSI), cyclic electron flow around PSI, and state transitions. PetG is required for either the stability or assembly of the cytochrome b6-f complex. In Chara vulgaris (Common stonewort), this protein is Cytochrome b6-f complex subunit 5.